The primary structure comprises 211 residues: MDDAHESPSDKGGETGESDETAAVPGDPGATDTDGIPEETDGDADVDLKEAAAEEGELESQDVSDLTTVEREDSSLLNPAAKKLKIDTKEKKEKKQKVDEDEIQKMQILVSSFSEEQLNRYEMYRRSAFPKAAIKRLIQSITGTSVSQNVVIAMSGISKVFVGEVVEEALDVCEKWGEMPPLQPKHMREAVRRLKSKGQIPNSKHKKIIFF.

At Met-1 the chain carries N-acetylmethionine. Positions 1 to 14 (MDDAHESPSDKGGE) are enriched in basic and acidic residues. The tract at residues 1–81 (MDDAHESPSD…EDSSLLNPAA (81 aa)) is disordered. 2 stretches are compositionally biased toward acidic residues: residues 35–45 (GIPEETDGDAD) and 53–62 (AEEGELESQD).

This sequence belongs to the TAF11 family. Component of the TFIID basal transcription factor complex, composed of TATA-box-binding protein TBP, and a number of TBP-associated factors (TAFs), including TAF1, TAF2, TAF3, TAF4, TAF5, TAF6, TAF7, TAF8, TAF9, TAF10, TAF11, TAF12 and TAF13. Interacts with TAF13 both in vitro and intracellularly; also interacts directly with TBP.

Its subcellular location is the nucleus. Its function is as follows. The TFIID basal transcription factor complex plays a major role in the initiation of RNA polymerase II (Pol II)-dependent transcription. TFIID recognizes and binds promoters with or without a TATA box via its subunit TBP, a TATA-box-binding protein, and promotes assembly of the pre-initiation complex (PIC). The TFIID complex consists of TBP and TBP-associated factors (TAFs), including TAF1, TAF2, TAF3, TAF4, TAF5, TAF6, TAF7, TAF8, TAF9, TAF10, TAF11, TAF12 and TAF13. TAF11, together with TAF13 and TBP, play key roles during promoter binding by the TFIID and TFIIA transcription factor complexes. This Homo sapiens (Human) protein is Transcription initiation factor TFIID subunit 11 (TAF11).